A 155-amino-acid polypeptide reads, in one-letter code: Small ribosomal subunit protein uS7c (155 aa).

The protein belongs to the universal ribosomal protein uS7 family. As to quaternary structure, part of the 30S ribosomal subunit.

The protein localises to the plastid. Its subcellular location is the chloroplast. One of the primary rRNA binding proteins, it binds directly to 16S rRNA where it nucleates assembly of the head domain of the 30S subunit. This is Small ribosomal subunit protein uS7c (rps7) from Butomus umbellatus (Flowering rush).